The following is a 200-amino-acid chain: dTTP/UTP pyrophosphatase (200 aa).

D81 functions as the Proton acceptor in the catalytic mechanism.

Belongs to the Maf family. YhdE subfamily. Requires a divalent metal cation as cofactor.

Its subcellular location is the cytoplasm. It catalyses the reaction dTTP + H2O = dTMP + diphosphate + H(+). It carries out the reaction UTP + H2O = UMP + diphosphate + H(+). In terms of biological role, nucleoside triphosphate pyrophosphatase that hydrolyzes dTTP and UTP. May have a dual role in cell division arrest and in preventing the incorporation of modified nucleotides into cellular nucleic acids. This is dTTP/UTP pyrophosphatase from Cupriavidus pinatubonensis (strain JMP 134 / LMG 1197) (Cupriavidus necator (strain JMP 134)).